The sequence spans 230 residues: Sugar fermentation stimulation protein homolog (230 aa).

Belongs to the SfsA family.

The polypeptide is Sugar fermentation stimulation protein homolog (Clostridium tetani (strain Massachusetts / E88)).